The sequence spans 564 residues: Threonine--tRNA ligase (564 aa).

Residues 167 to 464 (DHRAIGKRLE…LLEKTHGNLP (298 aa)) are catalytic. Zn(2+) contacts are provided by Cys-260, His-311, and His-441.

It belongs to the class-II aminoacyl-tRNA synthetase family. In terms of assembly, homodimer. Zn(2+) is required as a cofactor.

Its subcellular location is the cytoplasm. The catalysed reaction is tRNA(Thr) + L-threonine + ATP = L-threonyl-tRNA(Thr) + AMP + diphosphate + H(+). Catalyzes the attachment of threonine to tRNA(Thr) in a two-step reaction: L-threonine is first activated by ATP to form Thr-AMP and then transferred to the acceptor end of tRNA(Thr). Also edits incorrectly charged L-seryl-tRNA(Thr). This Mycoplasma pneumoniae (strain ATCC 29342 / M129 / Subtype 1) (Mycoplasmoides pneumoniae) protein is Threonine--tRNA ligase.